A 217-amino-acid polypeptide reads, in one-letter code: Glycerol-3-phosphate acyltransferase (217 aa).

The next 6 membrane-spanning stretches (helical) occupy residues Ile-3 to Gly-23, Val-56 to Leu-76, Gly-78 to Ala-98, Phe-120 to Leu-140, Ser-142 to Ala-162, and Ile-163 to Phe-183.

The protein belongs to the PlsY family. Probably interacts with PlsX.

Its subcellular location is the cell membrane. It catalyses the reaction an acyl phosphate + sn-glycerol 3-phosphate = a 1-acyl-sn-glycero-3-phosphate + phosphate. The protein operates within lipid metabolism; phospholipid metabolism. Functionally, catalyzes the transfer of an acyl group from acyl-phosphate (acyl-PO(4)) to glycerol-3-phosphate (G3P) to form lysophosphatidic acid (LPA). This enzyme utilizes acyl-phosphate as fatty acyl donor, but not acyl-CoA or acyl-ACP. The sequence is that of Glycerol-3-phosphate acyltransferase from Enterococcus faecalis (strain ATCC 700802 / V583).